The sequence spans 282 residues: Putative hydrolase Bcenmc03_4750 (282 aa).

Mg(2+) contacts are provided by glutamate 124, glutamate 126, and aspartate 155.

It belongs to the FAH family. It depends on Mg(2+) as a cofactor.

This is Putative hydrolase Bcenmc03_4750 from Burkholderia orbicola (strain MC0-3).